Reading from the N-terminus, the 701-residue chain is Aryl hydrocarbon receptor repressor (701 aa).

Residues 1-38 are disordered; sequence MMIPSGECTYAGRKRRKPIQKRRLTMGTEKSNPSKRHR. The span at 12–24 shows a compositional bias: basic residues; it reads GRKRRKPIQKRRL. The region spanning 25–78 is the bHLH domain; it reads TMGTEKSNPSKRHRDRLNTELDHLASLLPFSPDIISKLDKLSVLRLSVSYLRVK. Residues 106–176 form the PAS domain; sequence PVQEGRLLLE…RQLHWAMDPP (71 aa). Disordered stretches follow at residues 360 to 389 and 409 to 436; these read DPKG…QREM and TEQR…LVPH. Residues 365 to 375 show a composition bias toward basic and acidic residues; it reads SGDREEDDQKH. The segment covering 414–430 has biased composition (polar residues); sequence QEGTTKLTRQPSKSEPS. The interval 555–701 is needed for transcriptional repression; that stretch reads ASTTSCVWLG…SKGSDGIFLP (147 aa). Glycyl lysine isopeptide (Lys-Gly) (interchain with G-Cter in SUMO2) cross-links involve residues lysine 583 and lysine 660.

Interacts with ARNT, ANKRA2, HDAC4 and HDAC5. Interacts with ARNT; forms a heterodimer with ARNT. Highly expressed in testis and weakly expressed in heart and liver. Highly expressed in small intestine and cecum in a male-dominant sexual dimorphic fashion.

It localises to the cytoplasm. The protein localises to the nucleus. Functionally, mediates dioxin toxicity and is involved in regulation of cell growth and differentiation. Represses the transcription activity of AHR by competing with this transcription factor for heterodimer formation with the ARNT and subsequently binding to the xenobiotic response element (XRE) sequence present in the promoter regulatory region of variety of genes. Represses CYP1A1 by binding the XRE sequence and recruiting ANKRA2, HDAC4 and/or HDAC5. Autoregulates its expression by associating with its own XRE site. The sequence is that of Aryl hydrocarbon receptor repressor (Ahrr) from Rattus norvegicus (Rat).